A 264-amino-acid chain; its full sequence is Thymidylate synthase (264 aa).

Arg21 is a dUMP binding site. A (6R)-5,10-methylene-5,6,7,8-tetrahydrofolate-binding site is contributed by His51. 126–127 contributes to the dUMP binding site; it reads RR. The active-site Nucleophile is the Cys146. DUMP-binding positions include 166-169, Asn177, and 207-209; these read RSCD and HLY. Asp169 contacts (6R)-5,10-methylene-5,6,7,8-tetrahydrofolate. (6R)-5,10-methylene-5,6,7,8-tetrahydrofolate is bound at residue Ala263.

The protein belongs to the thymidylate synthase family. Bacterial-type ThyA subfamily. As to quaternary structure, homodimer.

It is found in the cytoplasm. The enzyme catalyses dUMP + (6R)-5,10-methylene-5,6,7,8-tetrahydrofolate = 7,8-dihydrofolate + dTMP. Its pathway is pyrimidine metabolism; dTTP biosynthesis. Catalyzes the reductive methylation of 2'-deoxyuridine-5'-monophosphate (dUMP) to 2'-deoxythymidine-5'-monophosphate (dTMP) while utilizing 5,10-methylenetetrahydrofolate (mTHF) as the methyl donor and reductant in the reaction, yielding dihydrofolate (DHF) as a by-product. This enzymatic reaction provides an intracellular de novo source of dTMP, an essential precursor for DNA biosynthesis. This chain is Thymidylate synthase, found in Salmonella arizonae (strain ATCC BAA-731 / CDC346-86 / RSK2980).